The following is a 78-amino-acid chain: Small ribosomal subunit protein bS18B (78 aa).

The disordered stretch occupies residues Met-1–Gly-22.

Belongs to the bacterial ribosomal protein bS18 family. In terms of assembly, part of the 30S ribosomal subunit. Forms a tight heterodimer with protein bS6.

Functionally, binds as a heterodimer with protein bS6 to the central domain of the 16S rRNA, where it helps stabilize the platform of the 30S subunit. The sequence is that of Small ribosomal subunit protein bS18B from Streptomyces avermitilis (strain ATCC 31267 / DSM 46492 / JCM 5070 / NBRC 14893 / NCIMB 12804 / NRRL 8165 / MA-4680).